Reading from the N-terminus, the 569-residue chain is Acyl-CoA-binding domain-containing protein 5 (569 aa).

The first 31 residues, 1–31 (MELFYELLLTAAASLLVAFLLARLLASAATA), serve as a signal peptide directing secretion. An ACB domain is found at 415–506 (IEKRFGVAAA…LSEAIPGWMG (92 aa)). K474 and Y493 together coordinate an acyl-CoA. The N-linked (GlcNAc...) asparagine glycan is linked to N508. Composition is skewed to polar residues over residues 533–544 (INQHDSQGNEDN) and 552–569 (LTSS…IPAE). Residues 533-569 (INQHDSQGNEDNTGMYEGHLTSSPNPEKGQSSDIPAE) are disordered.

The protein belongs to the ACBP family. In terms of tissue distribution, highly expressed in seeds and leaves. Expressed at low levels in roots.

It localises to the endoplasmic reticulum. Binds medium- and long-chain acyl-CoA esters with high affinity. Can interact in vitro with palmitoyl-CoA and linolenoyl-CoA. Binds phosphatidic acid (PA) and phosphatidylcholine (PC) in vitro. May play a role in the biosynthesis of phospholipids. This chain is Acyl-CoA-binding domain-containing protein 5, found in Oryza sativa subsp. japonica (Rice).